The following is a 251-amino-acid chain: 5'-nucleotidase SurE (251 aa).

Positions 8, 9, 39, and 91 each coordinate a divalent metal cation.

It belongs to the SurE nucleotidase family. It depends on a divalent metal cation as a cofactor.

Its subcellular location is the cytoplasm. It catalyses the reaction a ribonucleoside 5'-phosphate + H2O = a ribonucleoside + phosphate. In terms of biological role, nucleotidase that shows phosphatase activity on nucleoside 5'-monophosphates. The chain is 5'-nucleotidase SurE from Halorhodospira halophila (strain DSM 244 / SL1) (Ectothiorhodospira halophila (strain DSM 244 / SL1)).